We begin with the raw amino-acid sequence, 94 residues long: Co-chaperonin GroES (94 aa).

Belongs to the GroES chaperonin family. In terms of assembly, heptamer of 7 subunits arranged in a ring. Interacts with the chaperonin GroEL.

It is found in the cytoplasm. Functionally, together with the chaperonin GroEL, plays an essential role in assisting protein folding. The GroEL-GroES system forms a nano-cage that allows encapsulation of the non-native substrate proteins and provides a physical environment optimized to promote and accelerate protein folding. GroES binds to the apical surface of the GroEL ring, thereby capping the opening of the GroEL channel. The sequence is that of Co-chaperonin GroES from Bacillus cereus (strain ZK / E33L).